The sequence spans 382 residues: Homoserine O-succinyltransferase (382 aa).

Positions 51-359 (NAILVCHALS…EATQGHDAFL (309 aa)) constitute an AB hydrolase-1 domain. The active-site Nucleophile is the Ser157. Arg227 serves as a coordination point for substrate. Active-site residues include Asp322 and His355. Asp356 contacts substrate.

Belongs to the AB hydrolase superfamily. MetX family. In terms of assembly, homodimer.

It is found in the cytoplasm. It carries out the reaction L-homoserine + succinyl-CoA = O-succinyl-L-homoserine + CoA. It participates in amino-acid biosynthesis; L-methionine biosynthesis via de novo pathway; O-succinyl-L-homoserine from L-homoserine: step 1/1. Transfers a succinyl group from succinyl-CoA to L-homoserine, forming succinyl-L-homoserine. This is Homoserine O-succinyltransferase from Halorhodospira halophila (strain DSM 244 / SL1) (Ectothiorhodospira halophila (strain DSM 244 / SL1)).